The following is a 47-amino-acid chain: uncharacterized protein (47 aa).

Residues 28 to 45 traverse the membrane as a helical segment; the sequence is VMIWGCLPYFLYVLIRMF.

It localises to the cell membrane. This is an uncharacterized protein from Bacillus subtilis (strain 168).